A 562-amino-acid chain; its full sequence is 2-succinyl-5-enolpyruvyl-6-hydroxy-3-cyclohexene-1-carboxylate synthase (562 aa).

Belongs to the TPP enzyme family. MenD subfamily. In terms of assembly, homodimer. It depends on Mg(2+) as a cofactor. The cofactor is Mn(2+). Thiamine diphosphate serves as cofactor.

It catalyses the reaction isochorismate + 2-oxoglutarate + H(+) = 5-enolpyruvoyl-6-hydroxy-2-succinyl-cyclohex-3-ene-1-carboxylate + CO2. The protein operates within quinol/quinone metabolism; 1,4-dihydroxy-2-naphthoate biosynthesis; 1,4-dihydroxy-2-naphthoate from chorismate: step 2/7. It participates in cofactor biosynthesis; phylloquinone biosynthesis. Its function is as follows. Catalyzes the thiamine diphosphate-dependent decarboxylation of 2-oxoglutarate and the subsequent addition of the resulting succinic semialdehyde-thiamine pyrophosphate anion to isochorismate to yield 2-succinyl-5-enolpyruvyl-6-hydroxy-3-cyclohexene-1-carboxylate (SEPHCHC). The chain is 2-succinyl-5-enolpyruvyl-6-hydroxy-3-cyclohexene-1-carboxylate synthase from Thermosynechococcus vestitus (strain NIES-2133 / IAM M-273 / BP-1).